The primary structure comprises 166 residues: Transcription elongation factor GreA (166 aa).

This sequence belongs to the GreA/GreB family.

In terms of biological role, necessary for efficient RNA polymerase transcription elongation past template-encoded arresting sites. The arresting sites in DNA have the property of trapping a certain fraction of elongating RNA polymerases that pass through, resulting in locked ternary complexes. Cleavage of the nascent transcript by cleavage factors such as GreA or GreB allows the resumption of elongation from the new 3'terminus. GreA releases sequences of 2 to 3 nucleotides. The chain is Transcription elongation factor GreA from Anaeromyxobacter sp. (strain K).